A 304-amino-acid polypeptide reads, in one-letter code: Solute carrier family 25 member 34 (304 aa).

Solcar repeat units lie at residues 4 to 97 (VPPA…ACQA), 101 to 194 (QQPG…AKAW), and 204 to 295 (DSWL…LRKL). The next 6 membrane-spanning stretches (helical) occupy residues 7-27 (AVDL…TNPL), 45-65 (TYPR…RADG), 98-120 (GLSQ…GAFV), 170-191 (VGGA…FASA), 206-226 (WLVA…VMTP), and 278-301 (LGPH…WGQH).

Belongs to the mitochondrial carrier (TC 2.A.29) family.

Its subcellular location is the mitochondrion inner membrane. It catalyses the reaction a dicarboxylate(in) + sulfate(out) = a dicarboxylate(out) + sulfate(in). Putative antiporter that exchanges dicarboxylates and sulfur oxoanions across the inner membrane of mitochondria. The chain is Solute carrier family 25 member 34 (SLC25A34) from Bos taurus (Bovine).